The chain runs to 408 residues: S-adenosylmethionine:tRNA ribosyltransferase-isomerase (408 aa).

Belongs to the QueA family. Monomer.

It localises to the cytoplasm. It catalyses the reaction 7-aminomethyl-7-carbaguanosine(34) in tRNA + S-adenosyl-L-methionine = epoxyqueuosine(34) in tRNA + adenine + L-methionine + 2 H(+). Its pathway is tRNA modification; tRNA-queuosine biosynthesis. In terms of biological role, transfers and isomerizes the ribose moiety from AdoMet to the 7-aminomethyl group of 7-deazaguanine (preQ1-tRNA) to give epoxyqueuosine (oQ-tRNA). The sequence is that of S-adenosylmethionine:tRNA ribosyltransferase-isomerase from Trichormus variabilis (strain ATCC 29413 / PCC 7937) (Anabaena variabilis).